The following is a 235-amino-acid chain: Elongation factor Tu, chloroplastic (235 aa).

In terms of domain architecture, tr-type G spans 1 to 125 (KNMITGAAQM…AVDEYIPTPV (125 aa)). GTP is bound at residue 47 to 50 (NKQD).

Belongs to the TRAFAC class translation factor GTPase superfamily. Classic translation factor GTPase family. EF-Tu/EF-1A subfamily.

The protein localises to the plastid. It localises to the chloroplast. It carries out the reaction GTP + H2O = GDP + phosphate + H(+). Functionally, GTP hydrolase that promotes the GTP-dependent binding of aminoacyl-tRNA to the A-site of ribosomes during protein biosynthesis. In Gracilariopsis lemaneiformis (Red alga), this protein is Elongation factor Tu, chloroplastic (tufA).